We begin with the raw amino-acid sequence, 239 residues long: Ribosomal RNA small subunit methyltransferase G (239 aa).

Residues glycine 78, phenylalanine 83, 129–130 (AE), and arginine 148 each bind S-adenosyl-L-methionine.

Belongs to the methyltransferase superfamily. RNA methyltransferase RsmG family.

The protein resides in the cytoplasm. Functionally, specifically methylates the N7 position of a guanine in 16S rRNA. The polypeptide is Ribosomal RNA small subunit methyltransferase G (Clostridium botulinum (strain Loch Maree / Type A3)).